Reading from the N-terminus, the 817-residue chain is CD177 antigen (817 aa).

Residues 1–21 (MNSIPVLTLLGVTALLPCVPA) form the signal peptide. Residues 22 to 796 (LTCQKSSAQA…PSLAWTLRLS (775 aa)) lie on the Extracellular side of the membrane. 4 N-linked (GlcNAc...) asparagine glycosylation sites follow: N115, N189, N379, and N566. 4 UPAR/Ly6 domains span residues 134-203 (CPLC…SENC), 322-393 (CRHC…REDC), 511-581 (CPLC…ERCS), and 705-774 (CPMC…AEES). Residues 797 to 817 (AWMLGLSALLSSLYAGICPLC) form a helical; Anchor for type IV membrane protein membrane-spanning segment.

As to quaternary structure, found in a complex with integrin ITGAM/CD11b and ITGB2/CD18. Interacts with PECAM1 (via Ig-like C2-type domain 6); the interaction is Ca(2+)-dependent; the interaction is direct. Interacts with serine protease PRTN3/myeloblastin; the interaction tethers PRTN3 to the cell surface; the interaction is direct. Expressed in neutrophils.

It is found in the cell membrane. Functionally, in association with beta-2 integrin heterodimer ITGAM/CD11b and ITGB2/CD18, mediates activation of TNF-alpha primed neutrophils including degranulation and superoxide production. In addition, by preventing beta-2 integrin internalization and attenuating chemokine signaling favors adhesion over migration. Heterophilic interaction with PECAM1 on endothelial cells plays a role in neutrophil transendothelial migration in vitro. However, appears to be dispensable for neutrophil recruitment caused by bacterial infection in vivo. Acts as a receptor for the mature form of protease PRTN3 allowing its display at the cell surface of neutrophils. By displaying PRTN3 at the neutrophil cell surface, may play a role in enhancing endothelial cell junctional integrity and thus vascular integrity during neutrophil diapedesis. The chain is CD177 antigen (Cd177) from Mus musculus (Mouse).